The following is a 310-amino-acid chain: Cytochrome f (310 aa).

A signal peptide spans Met1–Ala27. Positions 28, 48, 51, and 52 each coordinate heme. Residues Ile277–Lys297 traverse the membrane as a helical segment.

It belongs to the cytochrome f family. As to quaternary structure, the 4 large subunits of the cytochrome b6-f complex are cytochrome b6, subunit IV (17 kDa polypeptide, PetD), cytochrome f and the Rieske protein, while the 4 small subunits are PetG, PetL, PetM and PetN. The complex functions as a dimer. Heme is required as a cofactor.

It localises to the cellular thylakoid membrane. Functionally, component of the cytochrome b6-f complex, which mediates electron transfer between photosystem II (PSII) and photosystem I (PSI), cyclic electron flow around PSI, and state transitions. The sequence is that of Cytochrome f from Synechococcus sp. (strain WH7803).